A 646-amino-acid chain; its full sequence is Threonine--tRNA ligase (646 aa).

The TGS domain maps to 1-63 (MAQISLTFPD…ETDAKIAIHT (63 aa)). Residues 247–544 (DHRKLGREME…LIENYAGKLP (298 aa)) are catalytic. Zn(2+) contacts are provided by Cys344, His395, and His521.

This sequence belongs to the class-II aminoacyl-tRNA synthetase family. In terms of assembly, homodimer. Requires Zn(2+) as cofactor.

The protein resides in the cytoplasm. It carries out the reaction tRNA(Thr) + L-threonine + ATP = L-threonyl-tRNA(Thr) + AMP + diphosphate + H(+). In terms of biological role, catalyzes the attachment of threonine to tRNA(Thr) in a two-step reaction: L-threonine is first activated by ATP to form Thr-AMP and then transferred to the acceptor end of tRNA(Thr). Also edits incorrectly charged L-seryl-tRNA(Thr). In Cereibacter sphaeroides (strain ATCC 17023 / DSM 158 / JCM 6121 / CCUG 31486 / LMG 2827 / NBRC 12203 / NCIMB 8253 / ATH 2.4.1.) (Rhodobacter sphaeroides), this protein is Threonine--tRNA ligase.